The sequence spans 110 residues: Large ribosomal subunit protein uL22 (110 aa).

Belongs to the universal ribosomal protein uL22 family. In terms of assembly, part of the 50S ribosomal subunit.

In terms of biological role, this protein binds specifically to 23S rRNA; its binding is stimulated by other ribosomal proteins, e.g. L4, L17, and L20. It is important during the early stages of 50S assembly. It makes multiple contacts with different domains of the 23S rRNA in the assembled 50S subunit and ribosome. Functionally, the globular domain of the protein is located near the polypeptide exit tunnel on the outside of the subunit, while an extended beta-hairpin is found that lines the wall of the exit tunnel in the center of the 70S ribosome. The chain is Large ribosomal subunit protein uL22 from Variovorax paradoxus (strain S110).